The chain runs to 346 residues: Biotin synthase (346 aa).

Residues 1 to 12 (MPDTATVSSESE) are compositionally biased toward polar residues. The tract at residues 1 to 21 (MPDTATVSSESEFSGHAHVAA) is disordered. The 229-residue stretch at 64–292 (NKVQLCSLLS…QSMVRLSAGR (229 aa)) folds into the Radical SAM core domain. The [4Fe-4S] cluster site is built by Cys-79, Cys-83, and Cys-86. Positions 123, 155, 215, and 287 each coordinate [2Fe-2S] cluster.

The protein belongs to the radical SAM superfamily. Biotin synthase family. In terms of assembly, homodimer. Requires [4Fe-4S] cluster as cofactor. It depends on [2Fe-2S] cluster as a cofactor.

The enzyme catalyses (4R,5S)-dethiobiotin + (sulfur carrier)-SH + 2 reduced [2Fe-2S]-[ferredoxin] + 2 S-adenosyl-L-methionine = (sulfur carrier)-H + biotin + 2 5'-deoxyadenosine + 2 L-methionine + 2 oxidized [2Fe-2S]-[ferredoxin]. It functions in the pathway cofactor biosynthesis; biotin biosynthesis; biotin from 7,8-diaminononanoate: step 2/2. Functionally, catalyzes the conversion of dethiobiotin (DTB) to biotin by the insertion of a sulfur atom into dethiobiotin via a radical-based mechanism. The chain is Biotin synthase from Myxococcus xanthus (strain DK1622).